The primary structure comprises 477 residues: Bifunctional protein HldE (477 aa).

The ribokinase stretch occupies residues 1–318 (MKVTLPEFER…ENAVRGRAET (318 aa)). 195-198 (NLSE) provides a ligand contact to ATP. The active site involves Asp264. Residues 344-477 (MTNGVFDILH…IKKIQKDSDK (134 aa)) form a cytidylyltransferase region.

The protein in the N-terminal section; belongs to the carbohydrate kinase PfkB family. This sequence in the C-terminal section; belongs to the cytidylyltransferase family. As to quaternary structure, homodimer.

It catalyses the reaction D-glycero-beta-D-manno-heptose 7-phosphate + ATP = D-glycero-beta-D-manno-heptose 1,7-bisphosphate + ADP + H(+). It carries out the reaction D-glycero-beta-D-manno-heptose 1-phosphate + ATP + H(+) = ADP-D-glycero-beta-D-manno-heptose + diphosphate. It functions in the pathway nucleotide-sugar biosynthesis; ADP-L-glycero-beta-D-manno-heptose biosynthesis; ADP-L-glycero-beta-D-manno-heptose from D-glycero-beta-D-manno-heptose 7-phosphate: step 1/4. Its pathway is nucleotide-sugar biosynthesis; ADP-L-glycero-beta-D-manno-heptose biosynthesis; ADP-L-glycero-beta-D-manno-heptose from D-glycero-beta-D-manno-heptose 7-phosphate: step 3/4. Functionally, catalyzes the phosphorylation of D-glycero-D-manno-heptose 7-phosphate at the C-1 position to selectively form D-glycero-beta-D-manno-heptose-1,7-bisphosphate. In terms of biological role, catalyzes the ADP transfer from ATP to D-glycero-beta-D-manno-heptose 1-phosphate, yielding ADP-D-glycero-beta-D-manno-heptose. The protein is Bifunctional protein HldE of Klebsiella pneumoniae subsp. pneumoniae (strain ATCC 700721 / MGH 78578).